We begin with the raw amino-acid sequence, 330 residues long: Phosphate acyltransferase (330 aa).

Belongs to the PlsX family. As to quaternary structure, homodimer. Probably interacts with PlsY.

Its subcellular location is the cytoplasm. It catalyses the reaction a fatty acyl-[ACP] + phosphate = an acyl phosphate + holo-[ACP]. It participates in lipid metabolism; phospholipid metabolism. Catalyzes the reversible formation of acyl-phosphate (acyl-PO(4)) from acyl-[acyl-carrier-protein] (acyl-ACP). This enzyme utilizes acyl-ACP as fatty acyl donor, but not acyl-CoA. The protein is Phosphate acyltransferase of Streptococcus pneumoniae (strain ATCC 700669 / Spain 23F-1).